The sequence spans 233 residues: Small ribosomal subunit protein uS3 (233 aa).

The KH type-2 domain maps to 39-107; that stretch reads VRQFLNKELE…PAQINIAEVR (69 aa).

The protein belongs to the universal ribosomal protein uS3 family. As to quaternary structure, part of the 30S ribosomal subunit. Forms a tight complex with proteins S10 and S14.

Binds the lower part of the 30S subunit head. Binds mRNA in the 70S ribosome, positioning it for translation. The sequence is that of Small ribosomal subunit protein uS3 from Edwardsiella ictaluri (strain 93-146).